The sequence spans 86 residues: Stage V sporulation protein S (86 aa).

In terms of biological role, interferes with sporulation at an early stage. Seems to play a positive role in allowing cells to progress beyond stage V of sporulation. In Bacillus subtilis (strain 168), this protein is Stage V sporulation protein S.